Here is a 122-residue protein sequence, read N- to C-terminus: Large ribosomal subunit protein uL14c (122 aa).

This sequence belongs to the universal ribosomal protein uL14 family. In terms of assembly, part of the 50S ribosomal subunit.

The protein localises to the plastid. Its function is as follows. Binds to 23S rRNA. The sequence is that of Large ribosomal subunit protein uL14c from Cuscuta gronovii (Common dodder).